The primary structure comprises 347 residues: Haptoglobin (347 aa).

The N-terminal stretch at 1 to 18 is a signal peptide; it reads MSALGAVIALLLWGQLFA. The region spanning 31-88 is the Sushi domain; it reads DGCPKPPEIANGYVEHLVRYQCKKYYRLRTEGDGVYTLNNEKQWTNKAVGDKLPECEA. Intrachain disulfides connect cysteine 52–cysteine 86, cysteine 90–cysteine 207, cysteine 250–cysteine 281, and cysteine 292–cysteine 322. A Peptidase S1 domain is found at 103–345; that stretch reads ILGGHLDAKG…IQDWVQKTIA (243 aa). Residues asparagine 125, asparagine 148, asparagine 152, and asparagine 182 are each glycosylated (N-linked (GlcNAc...) asparagine). The segment at 259 to 264 is interaction with CD163; sequence VPEKKT.

This sequence belongs to the peptidase S1 family. Tetramer of two alpha and two beta chains; disulfide-linked. The hemoglobin/haptoglobin complex is composed of a haptoglobin dimer bound to two hemoglobin alpha-beta dimers. Interacts with CD163. Interacts with ERGIC3. As to expression, expressed by the liver and secreted in plasma.

The protein localises to the secreted. Functionally, as a result of hemolysis, hemoglobin is found to accumulate in the kidney and is secreted in the urine. Haptoglobin captures, and combines with free plasma hemoglobin to allow hepatic recycling of heme iron and to prevent kidney damage. Haptoglobin also acts as an antioxidant, has antibacterial activity and plays a role in modulating many aspects of the acute phase response. Hemoglobin/haptoglobin complexes are rapidly cleared by the macrophage CD163 scavenger receptor expressed on the surface of liver Kupfer cells through an endocytic lysosomal degradation pathway. The protein is Haptoglobin (HP) of Ateles geoffroyi (Black-handed spider monkey).